A 727-amino-acid chain; its full sequence is ABC transporter G family member 6 (727 aa).

The 266-residue stretch at 68-333 (LSFTDLTYSV…FAEFGHPIPE (266 aa)) folds into the ABC transporter domain. 126-133 (GASGSGKS) contacts ATP. The ABC transmembrane type-2 domain occupies 421–631 (VELAVLAKRS…PYEAVLLNEF (211 aa)). 6 consecutive transmembrane segments (helical) span residues 440-460 (LFGI…TMFW), 475-495 (CFAF…PVFL), 517-537 (LSHS…FAAI), 560-580 (ASFW…PHVM), 581-601 (LGYT…GFFI), and 700-720 (LWVT…SLLL).

This sequence belongs to the ABC transporter superfamily. ABCG family. Eye pigment precursor importer (TC 3.A.1.204) subfamily.

It localises to the membrane. The protein is ABC transporter G family member 6 (ABCG6) of Arabidopsis thaliana (Mouse-ear cress).